The primary structure comprises 147 residues: MNGSIRKMMRVTCGMLLMVMSGVSQAAELHLESRGGSGTQLRDGAKVATGRIICREAHTGFHVWMNERQVDGRAERYVVQSKDGRHELRVRTGGDGWSPVKGEGGKGVSRPGQEEQVFFDVMADGNQDIAPGEYRFSVGGACVVPQE.

Residues Met1 to Ala26 form the signal peptide. Residues Arg91 to Pro111 are disordered.

It to E.coli AggB.

The sequence is that of Protein AfaD (afaD) from Escherichia coli.